We begin with the raw amino-acid sequence, 199 residues long: Fe/S biogenesis protein NfuA (199 aa).

Positions 151 and 154 each coordinate [4Fe-4S] cluster.

Belongs to the NfuA family. In terms of assembly, homodimer. [4Fe-4S] cluster is required as a cofactor.

Functionally, involved in iron-sulfur cluster biogenesis. Binds a 4Fe-4S cluster, can transfer this cluster to apoproteins, and thereby intervenes in the maturation of Fe/S proteins. Could also act as a scaffold/chaperone for damaged Fe/S proteins. In Xanthomonas oryzae pv. oryzae (strain MAFF 311018), this protein is Fe/S biogenesis protein NfuA.